Here is a 520-residue protein sequence, read N- to C-terminus: TnpB-like protein L79 (520 aa).

The span at 21–47 (GSKTKKKVFVKKKPPDKKPLKKPVKKT) shows a compositional bias: basic residues. Residues 21-52 (GSKTKKKVFVKKKPPDKKPLKKPVKKTVKTDK) are disordered. Cys-474, Cys-477, Cys-491, and Cys-494 together coordinate Zn(2+).

In the central section; belongs to the transposase 2 family. This sequence in the C-terminal section; belongs to the transposase 35 family.

The chain is TnpB-like protein L79 from Acanthamoeba polyphaga mimivirus (APMV).